The sequence spans 127 residues: Putative 2Fe-2S ferredoxin (127 aa).

Residues Cys23, Cys54, and Cys58 each coordinate [2Fe-2S] cluster.

It belongs to the 2Fe2S Shethna-type ferredoxin family. [2Fe-2S] cluster is required as a cofactor.

Ferredoxins are iron-sulfur proteins that transfer electrons in a wide variety of metabolic reactions. In Priestia megaterium (Bacillus megaterium), this protein is Putative 2Fe-2S ferredoxin (cbiW).